Consider the following 215-residue polypeptide: Vesicle transport protein SFT2C (215 aa).

Over 1-82 (MADLHRQLQE…RGQRLAAGGG (82 aa)) the chain is Cytoplasmic. The chain crosses the membrane as a helical span at residues 83–103 (CLLLAALCFGLAALYAPVLLL). Over 104–107 (RARK) the chain is Lumenal. The helical transmembrane segment at 108–128 (FALLWSLGSALALAGSALLRG) threads the bilayer. The Cytoplasmic portion of the chain corresponds to 129 to 142 (GAACGRLLRCEEAP). Residues 143–163 (SRPALLYMAALGATLFAALGL) form a helical membrane-spanning segment. Topologically, residues 164-166 (RST) are lumenal. A helical membrane pass occupies residues 167 to 187 (LLTVLGAGAQVAALLAALVGL). The Cytoplasmic segment spans residues 188 to 215 (LPWGGGTALRLALGRLGRGAGLAKVLPV).

Belongs to the SFT2 family.

Its subcellular location is the membrane. In terms of biological role, may be involved in fusion of retrograde transport vesicles derived from an endocytic compartment with the Golgi complex. This Homo sapiens (Human) protein is Vesicle transport protein SFT2C.